Here is a 422-residue protein sequence, read N- to C-terminus: 5-hydroxytryptamine receptor 1A (422 aa).

Residues Met-1–Gly-23 are disordered. The Extracellular segment spans residues Met-1–Ile-38. N-linked (GlcNAc...) asparagine glycans are attached at residues Asn-10, Asn-11, and Asn-24. Residues Thr-39–Ala-59 form a helical membrane-spanning segment. At Ala-60–Tyr-73 the chain is on the cytoplasmic side. The helical transmembrane segment at Leu-74–Val-98 threads the bilayer. The Extracellular portion of the chain corresponds to Leu-99–Val-107. The helical transmembrane segment at Thr-108–Leu-132 threads the bilayer. Cys-109 and Cys-187 are disulfide-bonded. Asp-116 and Cys-120 together coordinate serotonin. Positions Asp-133–Tyr-135 match the DRY motif; important for ligand-induced conformation changes motif. The Cytoplasmic portion of the chain corresponds to Asp-133–Arg-152. Residues Ala-153–Gly-174 form a helical membrane-spanning segment. At Trp-175–His-193 the chain is on the extracellular side. The chain crosses the membrane as a helical span at residues Gly-194–Gly-216. Over Arg-217–Thr-346 the chain is Cytoplasmic. The disordered stretch occupies residues Lys-235–Trp-263. Thr-314, Lys-345, Thr-346, and Gly-352 together coordinate 1D-myo-inositol 4-phosphate. Residues Leu-347–Phe-370 form a helical membrane-spanning segment. The Extracellular portion of the chain corresponds to Cys-371 to Pro-378. Residues Thr-379–Phe-403 form a helical membrane-spanning segment. Residues Asn-396–Tyr-400 carry the NPxxY motif; important for ligand-induced conformation changes and signaling motif. Residues Phe-403, Asn-404, and Lys-405 each contribute to the 1D-myo-inositol 4-phosphate site. The Cytoplasmic portion of the chain corresponds to Asn-404–Gln-422.

The protein belongs to the G-protein coupled receptor 1 family. 5-hydroxytryptamine receptor subfamily. HTR1A sub-subfamily. In terms of assembly, heterodimer; heterodimerizes with GPER1. Interacts with YIF1B. Interacts with GPR39 and GALR1.

The protein resides in the cell membrane. It localises to the cell projection. It is found in the dendrite. G-protein coupled receptor activity is regulated by lipids: phosphatidylinositol 4-phosphate increases HTR1A-mediated activity. In terms of biological role, G-protein coupled receptor for 5-hydroxytryptamine (serotonin). Also functions as a receptor for various drugs and psychoactive substances. Ligand binding causes a conformation change that triggers signaling via guanine nucleotide-binding proteins (G proteins) and modulates the activity of downstream effectors, such as adenylate cyclase. HTR1A is coupled to G(i)/G(o) G alpha proteins and mediates inhibitory neurotransmission: signaling inhibits adenylate cyclase activity and activates a phosphatidylinositol-calcium second messenger system that regulates the release of Ca(2+) ions from intracellular stores. Beta-arrestin family members regulate signaling by mediating both receptor desensitization and resensitization processes. The chain is 5-hydroxytryptamine receptor 1A (HTR1A) from Pongo pygmaeus (Bornean orangutan).